The primary structure comprises 384 residues: Zinc metalloproteinase nas-12 (384 aa).

Positions 1–25 are cleaved as a signal peptide; the sequence is MLYIPQFSIYFCLGYLLLFCKISNA. The 199-residue stretch at 73 to 271 folds into the Peptidase M12A domain; sequence VSIKGSSMNR…EKLNRLGQCG (199 aa). 5 disulfide bridges follow: cysteine 116-cysteine 270, cysteine 137-cysteine 156, cysteine 287-cysteine 325, cysteine 296-cysteine 318, and cysteine 305-cysteine 322. Histidine 164 is a Zn(2+) binding site. Glutamate 165 is an active-site residue. Zn(2+) contacts are provided by histidine 168 and histidine 174. The ShKT 1 domain occupies 287–325; that stretch reads CQDVATAVSCEGNRRRGMCKNPFYKQMMIKSCQKTCRLC. Asparagine 340 is a glycosylation site (N-linked (GlcNAc...) asparagine). 3 disulfide bridges follow: cysteine 348–cysteine 384, cysteine 355–cysteine 377, and cysteine 364–cysteine 381. Residues 348 to 384 form the ShKT 2 domain; that stretch reads CEDKHPRCDIYSHNGFCTLPFYDDVRYQLCAKTCNLC.

The cofactor is Zn(2+). Expressed in pharyngeal glands.

Its subcellular location is the secreted. Its function is as follows. Metalloprotease. The chain is Zinc metalloproteinase nas-12 (nas-12) from Caenorhabditis elegans.